Consider the following 101-residue polypeptide: NADH-quinone oxidoreductase subunit K 1 (101 aa).

3 helical membrane passes run 4–24 (IGTM…TVGV), 31–51 (VVIL…LVAF), and 64–84 (IFVM…VIAF).

The protein belongs to the complex I subunit 4L family. In terms of assembly, NDH-1 is composed of 14 different subunits. Subunits NuoA, H, J, K, L, M, N constitute the membrane sector of the complex.

Its subcellular location is the cell inner membrane. It carries out the reaction a quinone + NADH + 5 H(+)(in) = a quinol + NAD(+) + 4 H(+)(out). Its function is as follows. NDH-1 shuttles electrons from NADH, via FMN and iron-sulfur (Fe-S) centers, to quinones in the respiratory chain. The immediate electron acceptor for the enzyme in this species is believed to be ubiquinone. Couples the redox reaction to proton translocation (for every two electrons transferred, four hydrogen ions are translocated across the cytoplasmic membrane), and thus conserves the redox energy in a proton gradient. The polypeptide is NADH-quinone oxidoreductase subunit K 1 (Koribacter versatilis (strain Ellin345)).